Reading from the N-terminus, the 937-residue chain is Protein translocase subunit SecA (937 aa).

ATP is bound by residues Gln-87, 105–109 (GEGKT), and Asp-494. The tract at residues 881–937 (RGLNYIGPDEGGRASVHSDAEEYGGGTPAAAGTRRERREAARAEGKGKRGPKSRRKH) is disordered. 2 stretches are compositionally biased toward basic and acidic residues: residues 890–900 (EGGRASVHSDA) and 913–927 (TRRE…EGKG). Residues 928-937 (KRGPKSRRKH) show a composition bias toward basic residues.

Belongs to the SecA family. In terms of assembly, monomer and homodimer. Part of the essential Sec protein translocation apparatus which comprises SecA, SecYEG and auxiliary proteins SecDF. Other proteins may also be involved.

It localises to the cell membrane. It is found in the cytoplasm. The enzyme catalyses ATP + H2O + cellular proteinSide 1 = ADP + phosphate + cellular proteinSide 2.. Functionally, part of the Sec protein translocase complex. Interacts with the SecYEG preprotein conducting channel. Has a central role in coupling the hydrolysis of ATP to the transfer of proteins into and across the cell membrane, serving as an ATP-driven molecular motor driving the stepwise translocation of polypeptide chains across the membrane. In Nocardia farcinica (strain IFM 10152), this protein is Protein translocase subunit SecA.